A 488-amino-acid polypeptide reads, in one-letter code: Catalase (488 aa).

The disordered stretch occupies residues 1 to 24; that stretch reads MTERKNLTTNQGTPVGDNQNSMTA. The span at 7 to 23 shows a compositional bias: polar residues; sequence LTTNQGTPVGDNQNSMT. Active-site residues include His55 and Asn128. Tyr338 is a heme binding site.

The protein belongs to the catalase family. Heme serves as cofactor.

It localises to the cytoplasm. It carries out the reaction 2 H2O2 = O2 + 2 H2O. Its function is as follows. Decomposes hydrogen peroxide into water and oxygen; serves to protect cells from the toxic effects of hydrogen peroxide. This chain is Catalase (kat), found in Listeria innocua serovar 6a (strain ATCC BAA-680 / CLIP 11262).